The sequence spans 434 residues: Gamma-enolase (434 aa).

2 residues coordinate substrate: His-158 and Glu-167. The active-site Proton donor is the Glu-210. Residues Asp-245, Glu-293, and Asp-318 each coordinate Mg(2+). Residues Glu-293 and Asp-318 each contribute to the substrate site. Lys-343 acts as the Proton acceptor in catalysis. Residues 370–373 (SHRS) and Lys-394 contribute to the substrate site.

The protein belongs to the enolase family. Homodimer. Requires Mg(2+) as cofactor. Expressed in the brain and, to much less but significant extents, in the pituitary and adrenal glands.

The protein localises to the cytoplasm. The enzyme catalyses (2R)-2-phosphoglycerate = phosphoenolpyruvate + H2O. Its pathway is carbohydrate degradation; glycolysis; pyruvate from D-glyceraldehyde 3-phosphate: step 4/5. This chain is Gamma-enolase (ENO2), found in Gallus gallus (Chicken).